The chain runs to 260 residues: G patch domain-containing protein 11 (260 aa).

Residues 25-61 are a coiled coil; it reads MLRQIREARRKEEKRQEANLKNRQKSIKEEEQERRDM. The disordered stretch occupies residues 33–60; sequence RRKEEKRQEANLKNRQKSIKEEEQERRD. In terms of domain architecture, G-patch spans 69–115; the sequence is CENKGFALLQKMGYKSGQALGKSGDGIVEPIPLNVKTGKSGIGHETL. At Lys-123 the chain carries N6-acetyllysine. The tract at residues 187 to 212 is disordered; it reads WLRPEEETEEETEEEKEQDEDEYKSE. Positions 192–210 are enriched in acidic residues; sequence EETEEETEEEKEQDEDEYK.

Belongs to the GPATCH11 family.

The protein resides in the chromosome. It localises to the centromere. Its subcellular location is the kinetochore. The polypeptide is G patch domain-containing protein 11 (GPATCH11) (Bos taurus (Bovine)).